A 318-amino-acid chain; its full sequence is Thymidylate synthase (318 aa).

Residues Arg-25 and Arg-180 to Arg-181 each bind dUMP. The active-site Nucleophile is the Cys-200. DUMP-binding positions include Arg-220–Asp-223, Asn-231, and His-261–Tyr-263. Residue Asp-223 coordinates (6R)-5,10-methylene-5,6,7,8-tetrahydrofolate. Ala-317 lines the (6R)-5,10-methylene-5,6,7,8-tetrahydrofolate pocket.

The protein belongs to the thymidylate synthase family. Bacterial-type ThyA subfamily. In terms of assembly, homodimer.

It is found in the cytoplasm. It catalyses the reaction dUMP + (6R)-5,10-methylene-5,6,7,8-tetrahydrofolate = 7,8-dihydrofolate + dTMP. Its pathway is pyrimidine metabolism; dTTP biosynthesis. Catalyzes the reductive methylation of 2'-deoxyuridine-5'-monophosphate (dUMP) to 2'-deoxythymidine-5'-monophosphate (dTMP) while utilizing 5,10-methylenetetrahydrofolate (mTHF) as the methyl donor and reductant in the reaction, yielding dihydrofolate (DHF) as a by-product. This enzymatic reaction provides an intracellular de novo source of dTMP, an essential precursor for DNA biosynthesis. The polypeptide is Thymidylate synthase (Bacillus cytotoxicus (strain DSM 22905 / CIP 110041 / 391-98 / NVH 391-98)).